The chain runs to 418 residues: D-amino acid dehydrogenase (418 aa).

3–17 (VLVLGAGVAGVSSAW) is a binding site for FAD.

It belongs to the DadA oxidoreductase family. It depends on FAD as a cofactor.

It carries out the reaction a D-alpha-amino acid + A + H2O = a 2-oxocarboxylate + AH2 + NH4(+). The protein operates within amino-acid degradation; D-alanine degradation; NH(3) and pyruvate from D-alanine: step 1/1. In terms of biological role, oxidative deamination of D-amino acids. The polypeptide is D-amino acid dehydrogenase (Neisseria meningitidis serogroup C / serotype 2a (strain ATCC 700532 / DSM 15464 / FAM18)).